Reading from the N-terminus, the 263-residue chain is MTLLPDPAEARAARLACRQGAPRPTAGMAPGFTQCNMISLPKDWAWDFLLYAQRNPKPCPVLDVTDPGSHRTALAPKADLRTDIPLYRIWRDGVLAEETPDATAAWAEHPDLVTFLIGCSFTFETPLQQAGIEVRHIAQGCNVPMFLTDRDCRPAGRLHGKMVVSMRPIPAGRVAEAAMISGRTPAVHGAPVHIGAPEALGIADLSRPDFGDPVQIRPGEVPVFWACGVTPQAALMASKPPFAITHAPGYMFITDVPDTHWQV.

Belongs to the D-glutamate cyclase family.

The protein is Putative hydro-lyase Pden_0321 of Paracoccus denitrificans (strain Pd 1222).